A 409-amino-acid polypeptide reads, in one-letter code: Ribose-phosphate pyrophosphokinase 3, chloroplastic (409 aa).

2 stretches are compositionally biased toward low complexity: residues 1 to 16 (MATA…PAAA) and 34 to 43 (PASAFARPSP). The tract at residues 1-43 (MATAASASASASPAAAFGAKTRRPGPSPSPSPSPASAFARPSP) is disordered. The transit peptide at 1–44 (MATAASASASASPAAAFGAKTRRPGPSPSPSPSPASAFARPSPR) directs the protein to the chloroplast. Positions 229 and 231 each coordinate Mg(2+). Residues 312 to 327 (GRHVVIVDDLVQSGGT) form a binding of phosphoribosylpyrophosphate region.

It belongs to the ribose-phosphate pyrophosphokinase family. It depends on Mg(2+) as a cofactor.

Its subcellular location is the plastid. The protein resides in the chloroplast. The catalysed reaction is D-ribose 5-phosphate + ATP = 5-phospho-alpha-D-ribose 1-diphosphate + AMP + H(+). In Oryza sativa subsp. japonica (Rice), this protein is Ribose-phosphate pyrophosphokinase 3, chloroplastic.